Here is a 244-residue protein sequence, read N- to C-terminus: Probable ABC transporter ATP-binding protein in ycf23-apcF intergenic region (244 aa).

Residues 9–241 (LEINNLTVSY…KLSTLFGEHI (233 aa)) form the ABC transporter domain. 41–48 (GPNGAGKS) provides a ligand contact to ATP.

The protein belongs to the ABC transporter superfamily.

The protein localises to the plastid. It localises to the cyanelle. This Cyanophora paradoxa protein is Probable ABC transporter ATP-binding protein in ycf23-apcF intergenic region.